A 94-amino-acid polypeptide reads, in one-letter code: Co-chaperonin GroES (94 aa).

The protein belongs to the GroES chaperonin family. Heptamer of 7 subunits arranged in a ring. Interacts with the chaperonin GroEL.

The protein resides in the cytoplasm. In terms of biological role, together with the chaperonin GroEL, plays an essential role in assisting protein folding. The GroEL-GroES system forms a nano-cage that allows encapsulation of the non-native substrate proteins and provides a physical environment optimized to promote and accelerate protein folding. GroES binds to the apical surface of the GroEL ring, thereby capping the opening of the GroEL channel. This Streptococcus pneumoniae (strain ATCC BAA-255 / R6) protein is Co-chaperonin GroES.